The following is a 545-amino-acid chain: Capsular polysaccharide phosphotransferase SacB (545 aa).

It belongs to the stealth family.

Part of a capsular biosynthesis operon and has been suggested to be the polymerase that links individual UDP-N-acetyl-D-mannosamine monomers. In serotype A the capsule is composed of repeated units of (alpha 1-6)-linked N-acetyl-D-mannosamine-1-phosphate. Non-polar disruption of this open reading frame prevented capsule synthesis. The chain is Capsular polysaccharide phosphotransferase SacB (sacB) from Neisseria meningitidis serogroup A.